Reading from the N-terminus, the 182-residue chain is Flagellar transcriptional regulator FlhC (182 aa).

The Zn(2+) site is built by C138, C141, C158, and C161.

The protein belongs to the FlhC family. Heterohexamer composed of two FlhC and four FlhD subunits. Each FlhC binds a FlhD dimer, forming a heterotrimer, and a hexamer assembles by dimerization of two heterotrimers. Requires Zn(2+) as cofactor.

Its subcellular location is the cytoplasm. In terms of biological role, functions in complex with FlhD as a master transcriptional regulator that regulates transcription of several flagellar and non-flagellar operons by binding to their promoter region. Activates expression of class 2 flagellar genes, including fliA, which is a flagellum-specific sigma factor that turns on the class 3 genes. Also regulates genes whose products function in a variety of physiological pathways. This Gallionella capsiferriformans (strain ES-2) (Gallionella ferruginea capsiferriformans (strain ES-2)) protein is Flagellar transcriptional regulator FlhC.